The primary structure comprises 331 residues: uncharacterized protein (331 aa).

7 consecutive Pentapeptide repeat domains span residues 20 to 59 (LKLP…NLGQ), 60 to 99 (ANLV…ILRD), 100 to 139 (SDMT…NMRQ), 151 to 190 (AILG…DLRK), 191 to 230 (ADLS…KISE), 231 to 270 (AEMT…DLSR), and 271 to 310 (ANLT…DLMS).

This is an uncharacterized protein from Synechocystis sp. (strain ATCC 27184 / PCC 6803 / Kazusa).